The chain runs to 711 residues: MKLKLNVLTIILLPVHLLITIYSALIFIPWYFLTNAKKKNAMAKRIKAKPTSDKPGSPYRSVTHFDSLAVIDIPGADTLDKLFDHAVSKFGKKDSLGTREILSEENEMQPNGKVFKKLILGNYKWMNYLEVNRRVNNFGSGLTALGLKPKNTIAIFCETRAEWMIAAQTCFKYNFPLVTLYATLGKEAVVHGLNESEASYLITSVELLESKLKTALLDISCVKHIIYVDNKAINKAEYPEGFEIHSMQSVEELGSNPENLGIPPSRPTPSDMAIVMYTSGSTGRPKGVMMHHSNLIAGMTGQCERIPGLGPKDTYIGYLPLAHVLELTAEISCFTYGCRIGYSSPLTLSDQSSKIKKGSKGDCTVLKPTLMAAVPEIMDRIYKNVMSKVQEMNYIQKTLFKIGYDYKLEQIKKGYDAPLCNLLLFKKVKALLGGNVRMMLSGGAPLSPQTHRFMNVCFCCPIGQGYGLTESCGAGTVTEVTDYTTGRVGAPLICCEIKLKDWQEGGYTINDKPNPRGEIVIGGQNISMGYFKNEEKTAEDYSVDENGQRWFCTGDIGEFHPDGCLQIIDRKKDLVKLQAGEYVSLGKVEAALKNCPLIDNICAFAKSDQSYVISFVVPNQKRLTLLAQQKGVEGTWVDICNNPAMEAEILKEIREAANAMKLERFEIPIKVRLSPEPWTPETGLVTDAFKLKRKELRNHYLKDIERMYGGK.

Residues 8 to 28 (LTIILLPVHLLITIYSALIFI) traverse the membrane as a helical; Signal-anchor for type III membrane protein segment. Topologically, residues 29-711 (PWYFLTNAKK…KDIERMYGGK (683 aa)) are cytoplasmic. Ser447 bears the Phosphoserine mark.

Belongs to the ATP-dependent AMP-binding enzyme family. Mg(2+) serves as cofactor.

It localises to the mitochondrion outer membrane. The protein resides in the peroxisome membrane. Its subcellular location is the microsome membrane. It is found in the endoplasmic reticulum membrane. The protein localises to the cell membrane. It catalyses the reaction a long-chain fatty acid + ATP + CoA = a long-chain fatty acyl-CoA + AMP + diphosphate. The catalysed reaction is (5Z,8Z,11Z,14Z)-eicosatetraenoate + ATP + CoA = (5Z,8Z,11Z,14Z)-eicosatetraenoyl-CoA + AMP + diphosphate. It carries out the reaction hexadecanoate + ATP + CoA = hexadecanoyl-CoA + AMP + diphosphate. The enzyme catalyses (E)-hexadec-2-enoate + ATP + CoA = (2E)-hexadecenoyl-CoA + AMP + diphosphate. It catalyses the reaction 15-hydroxy-(5Z,8Z,11Z,13E)-eicosatetraenoate + ATP + CoA = 15-hydroxy-(5Z,8Z,11Z,13E)-eicosatetraenoyl-CoA + AMP + diphosphate. The catalysed reaction is 12-hydroxy-(5Z,8Z,10E,14Z)-eicosatetraenoate + ATP + CoA = 12-hydroxy-(5Z,8Z,10E,14Z)-eicosatetraenoyl-CoA + AMP + diphosphate. It carries out the reaction 5-hydroxy-(6E,8Z,11Z,14Z)-eicosatetraenoate + ATP + CoA = 5-hydroxy-(6E,8Z,11Z,14Z)-eicosatetraenoyl-CoA + AMP + diphosphate. The enzyme catalyses 5,6-epoxy-(8Z,11Z,14Z)-eicosatrienoate + ATP + CoA = 5,6-epoxy-(8Z,11Z,14Z)-eicosatrienoyl-CoA + AMP + diphosphate. It catalyses the reaction 14,15-epoxy-(5Z,8Z,11Z)-eicosatrienoate + ATP + CoA = 14,15-epoxy-(5Z,8Z,11Z)-eicosatrienoyl-CoA + AMP + diphosphate. The catalysed reaction is 11,12-epoxy-(5Z,8Z,14Z)-eicosatrienoate + ATP + CoA = 11,12-epoxy-(5Z,8Z,14Z)-eicosatrienoyl-CoA + AMP + diphosphate. It carries out the reaction 8,9-epoxy-(5Z,11Z,14Z)-eicosatrienoate + ATP + CoA = 8,9-epoxy-(5Z,11Z,14Z)-eicosatrienoyl-CoA + AMP + diphosphate. With respect to regulation, both triacsin C and rosiglitazone inhibit arachidonoyl-CoA ligase activity. Functionally, catalyzes the conversion of long-chain fatty acids to their active form acyl-CoA for both synthesis of cellular lipids, and degradation via beta-oxidation. Preferentially activates arachidonate and eicosapentaenoate as substrates. Preferentially activates 8,9-EET &gt; 14,15-EET &gt; 5,6-EET &gt; 11,12-EET. Modulates glucose-stimulated insulin secretion by regulating the levels of unesterified EETs. Modulates prostaglandin E2 secretion. This chain is Long-chain-fatty-acid--CoA ligase 4 (ACSL4), found in Homo sapiens (Human).